The chain runs to 452 residues: Tubulin alpha-1D chain (452 aa).

An MREC motif motif is present at residues 1–4 (MREC). GTP is bound at residue glutamine 11. Lysine 40 carries the post-translational modification N6-acetyllysine. Positions 71, 140, 144, 145, 179, 206, and 228 each coordinate GTP. Position 71 (glutamate 71) interacts with Mg(2+). The active site involves glutamate 254. A 3'-nitrotyrosine modification is found at tyrosine 282. Residues 432 to 452 (YEEVGMDSVEGEGEEEEGDEY) are disordered. Residue serine 439 is modified to Phosphoserine. Glutamate 446 carries the post-translational modification 5-glutamyl polyglutamate. Tyrosine 452 is subject to 3'-nitrotyrosine.

Belongs to the tubulin family. As to quaternary structure, dimer of alpha and beta chains. A typical microtubule is a hollow water-filled tube with an outer diameter of 25 nm and an inner diameter of 15 nM. Alpha-beta heterodimers associate head-to-tail to form protofilaments running lengthwise along the microtubule wall with the beta-tubulin subunit facing the microtubule plus end conferring a structural polarity. Microtubules usually have 13 protofilaments but different protofilament numbers can be found in some organisms and specialized cells. It depends on Mg(2+) as a cofactor. Some glutamate residues at the C-terminus are polyglycylated, resulting in polyglycine chains on the gamma-carboxyl group. Glycylation is mainly limited to tubulin incorporated into axonemes (cilia and flagella) whereas glutamylation is prevalent in neuronal cells, centrioles, axonemes, and the mitotic spindle. Both modifications can coexist on the same protein on adjacent residues, and lowering polyglycylation levels increases polyglutamylation, and reciprocally. Cilia and flagella glycylation is required for their stability and maintenance. Flagella glycylation controls sperm motility. Post-translationally, some glutamate residues at the C-terminus are polyglutamylated, resulting in polyglutamate chains on the gamma-carboxyl group. Polyglutamylation plays a key role in microtubule severing by spastin (SPAST). SPAST preferentially recognizes and acts on microtubules decorated with short polyglutamate tails: severing activity by SPAST increases as the number of glutamates per tubulin rises from one to eight, but decreases beyond this glutamylation threshold. Glutamylation is also involved in cilia motility. In terms of processing, acetylation of alpha chains at Lys-40 is located inside the microtubule lumen. This modification has been correlated with increased microtubule stability, intracellular transport and ciliary assembly. Methylation of alpha chains at Lys-40 is found in mitotic microtubules and is required for normal mitosis and cytokinesis contributing to genomic stability. Post-translationally, nitration of Tyr-452 is irreversible and interferes with normal dynein intracellular distribution. In terms of processing, undergoes a tyrosination/detyrosination cycle, the cyclic removal and re-addition of a C-terminal tyrosine residue by the enzymes tubulin tyrosine carboxypeptidase (MATCAP, VASH1 or VASH2) and tubulin tyrosine ligase (TTL), respectively. Tyrosination promotes microtubule interaction with CAP-Gly domain-containing proteins such as CLIP1, CLIP2 and DCTN1. Tyrosination regulates the initiation of dynein-dynactin motility via interaction with DCTN1, which brings the dynein-dynactin complex into contact with microtubules. In neurons, tyrosinated tubulins mediate the initiation of retrograde vesicle transport. Post-translationally, detyrosination is involved in metaphase plate congression by guiding chromosomes during mitosis: detyrosination promotes interaction with CENPE, promoting pole-proximal transport of chromosomes toward the equator. Detyrosination increases microtubules-dependent mechanotransduction in dystrophic cardiac and skeletal muscle. In cardiomyocytes, detyrosinated microtubules are required to resist to contractile compression during contraction: detyrosination promotes association with desmin (DES) at force-generating sarcomeres, leading to buckled microtubules and mechanical resistance to contraction.

It is found in the cytoplasm. The protein localises to the cytoskeleton. The enzyme catalyses GTP + H2O = GDP + phosphate + H(+). Its function is as follows. Tubulin is the major constituent of microtubules, a cylinder consisting of laterally associated linear protofilaments composed of alpha- and beta-tubulin heterodimers. Microtubules grow by the addition of GTP-tubulin dimers to the microtubule end, where a stabilizing cap forms. Below the cap, tubulin dimers are in GDP-bound state, owing to GTPase activity of alpha-tubulin. This Bos taurus (Bovine) protein is Tubulin alpha-1D chain (TUBA1D).